A 495-amino-acid polypeptide reads, in one-letter code: Steroid 21-hydroxylase (495 aa).

Residues R92 and K121 each coordinate heme b. 17alpha-hydroxyprogesterone is bound at residue R234. Progesterone is bound at residue R234. Residues H366, R427, and C429 each contribute to the heme b site.

It belongs to the cytochrome P450 family. Requires heme b as cofactor.

It is found in the endoplasmic reticulum membrane. Its subcellular location is the microsome membrane. It catalyses the reaction progesterone + reduced [NADPH--hemoprotein reductase] + O2 = 21-hydroxyprogesterone + oxidized [NADPH--hemoprotein reductase] + H2O + H(+). The enzyme catalyses 17alpha-hydroxyprogesterone + reduced [NADPH--hemoprotein reductase] + O2 = 11-deoxycortisol + oxidized [NADPH--hemoprotein reductase] + H2O + H(+). Its function is as follows. A cytochrome P450 monooxygenase that plays a major role in adrenal steroidogenesis. Catalyzes the hydroxylation at C-21 of progesterone and 17alpha-hydroxyprogesterone to respectively form 11-deoxycorticosterone and 11-deoxycortisol, intermediate metabolites in the biosynthetic pathway of mineralocorticoids and glucocorticoids. Mechanistically, uses molecular oxygen inserting one oxygen atom into a substrate, and reducing the second into a water molecule, with two electrons provided by NADPH via cytochrome P450 reductase (CPR; NADPH-ferrihemoprotein reductase). The protein is Steroid 21-hydroxylase (CYP21A2) of Homo sapiens (Human).